The following is a 351-amino-acid chain: Outer membrane protein A (351 aa).

An N-terminal signal peptide occupies residues 1–21 (MKKTAIAITVALAGFATVAQA). 8 consecutive transmembrane segments (beta stranded) span residues 27 to 37 (TWYTGAKLGWS), 55 to 66 (QLGAGAFGGYQV), 70 to 78 (VGFEMGYDW), 96 to 107 (QGVQLTAKLGYP), 112 to 120 (LDVYTRLGG), 147 to 156 (PVFAGGVEWA), 161 to 168 (IATRLEYQ), and 187 to 195 (LLSLGVSYR). Repeat copies occupy residues 206 to 207 (AP), 208 to 209 (AP), 210 to 211 (AP), and 212 to 213 (AP). Positions 206–213 (APAPAPAP) are 4 X 2 AA tandem repeats of A-P. Residues 215–343 (VQTKHFTLKS…RVEIEVKGIK (129 aa)) form the OmpA-like domain. Cys-316 and Cys-328 are joined by a disulfide.

Belongs to the outer membrane OOP (TC 1.B.6) superfamily. OmpA family. As to quaternary structure, monomer and homodimer.

The protein localises to the cell outer membrane. Functionally, with TolR probably plays a role in maintaining the position of the peptidoglycan cell wall in the periplasm. Acts as a porin with low permeability that allows slow penetration of small solutes; an internal gate slows down solute passage. In terms of biological role, required for conjugation with F-type plasmids; probably serves as the mating receptor on recipient cells. The polypeptide is Outer membrane protein A (Shigella dysenteriae).